Consider the following 266-residue polypeptide: Glucosamine-6-phosphate deaminase (266 aa).

Catalysis depends on Asp-72, which acts as the Proton acceptor; for enolization step. The active-site For ring-opening step is the Asp-141. The Proton acceptor; for ring-opening step role is filled by His-143. Glu-148 (for ring-opening step) is an active-site residue.

It belongs to the glucosamine/galactosamine-6-phosphate isomerase family. NagB subfamily. Homohexamer; trimer of disulfide-linked dimers.

It catalyses the reaction alpha-D-glucosamine 6-phosphate + H2O = beta-D-fructose 6-phosphate + NH4(+). The protein operates within amino-sugar metabolism; N-acetylneuraminate degradation; D-fructose 6-phosphate from N-acetylneuraminate: step 5/5. Allosterically activated by N-acetylglucosamine 6-phosphate (GlcNAc6P). Its function is as follows. Catalyzes the reversible isomerization-deamination of glucosamine 6-phosphate (GlcN6P) to form fructose 6-phosphate (Fru6P) and ammonium ion. The polypeptide is Glucosamine-6-phosphate deaminase (Shigella dysenteriae serotype 1 (strain Sd197)).